A 763-amino-acid polypeptide reads, in one-letter code: Xaa-Pro dipeptidyl-peptidase (763 aa).

Catalysis depends on charge relay system residues serine 348, aspartate 468, and histidine 498.

This sequence belongs to the peptidase S15 family. Homodimer.

It is found in the cytoplasm. The catalysed reaction is Hydrolyzes Xaa-Pro-|- bonds to release unblocked, N-terminal dipeptides from substrates including Ala-Pro-|-p-nitroanilide and (sequentially) Tyr-Pro-|-Phe-Pro-|-Gly-Pro-|-Ile.. In terms of biological role, removes N-terminal dipeptides sequentially from polypeptides having unsubstituted N-termini provided that the penultimate residue is proline. In Lactococcus lactis subsp. cremoris (Streptococcus cremoris), this protein is Xaa-Pro dipeptidyl-peptidase (pepX).